The chain runs to 128 residues: Large ribosomal subunit protein bL12 (128 aa).

It belongs to the bacterial ribosomal protein bL12 family. In terms of assembly, homodimer. Part of the ribosomal stalk of the 50S ribosomal subunit. Forms a multimeric L10(L12)X complex, where L10 forms an elongated spine to which 2 to 4 L12 dimers bind in a sequential fashion. Binds GTP-bound translation factors.

Functionally, forms part of the ribosomal stalk which helps the ribosome interact with GTP-bound translation factors. Is thus essential for accurate translation. The chain is Large ribosomal subunit protein bL12 from Aquifex aeolicus (strain VF5).